The chain runs to 246 residues: tRNA pseudouridine synthase C (246 aa).

Residue aspartate 58 is part of the active site.

This sequence belongs to the pseudouridine synthase RluA family.

The catalysed reaction is uridine(65) in tRNA = pseudouridine(65) in tRNA. Functionally, responsible for synthesis of pseudouridine from uracil-65 in transfer RNAs. The chain is tRNA pseudouridine synthase C (truC) from Vibrio parahaemolyticus serotype O3:K6 (strain RIMD 2210633).